The following is a 94-amino-acid chain: Co-chaperonin GroES (94 aa).

Belongs to the GroES chaperonin family. As to quaternary structure, heptamer of 7 subunits arranged in a ring. Interacts with the chaperonin GroEL.

It localises to the cytoplasm. In terms of biological role, together with the chaperonin GroEL, plays an essential role in assisting protein folding. The GroEL-GroES system forms a nano-cage that allows encapsulation of the non-native substrate proteins and provides a physical environment optimized to promote and accelerate protein folding. GroES binds to the apical surface of the GroEL ring, thereby capping the opening of the GroEL channel. The sequence is that of Co-chaperonin GroES from Ruminiclostridium cellulolyticum (strain ATCC 35319 / DSM 5812 / JCM 6584 / H10) (Clostridium cellulolyticum).